The primary structure comprises 146 residues: MRLEELKAPAGANKRTKRVGRGTGSGHGKTSTRGHKGQKSRSGGGVRPGFEGGQMPLQRRLPKRGFNNIFKKVYAIVNVEDLNIFPDGSEVNPDTLQETGLVKAIKDGVKILGNGVLEKRLQVKAHKISKQAEEKITAKGGKVEVI.

Residues Met-1–Arg-59 form a disordered region. Residues Thr-30–Lys-39 show a composition bias toward basic residues. Residues Ser-42 to Gly-52 show a composition bias toward gly residues.

It belongs to the universal ribosomal protein uL15 family. As to quaternary structure, part of the 50S ribosomal subunit.

Functionally, binds to the 23S rRNA. The sequence is that of Large ribosomal subunit protein uL15 from Syntrophomonas wolfei subsp. wolfei (strain DSM 2245B / Goettingen).